The primary structure comprises 800 residues: DNA topoisomerase 4 subunit A (800 aa).

The region spanning 31–495 (LPDVRDGLKP…EIEEIKIDKE (465 aa)) is the Topo IIA-type catalytic domain. Tyr-119 (O-(5'-phospho-DNA)-tyrosine intermediate) is an active-site residue.

Belongs to the type II topoisomerase GyrA/ParC subunit family. ParC type 2 subfamily. As to quaternary structure, heterotetramer composed of ParC and ParE.

The protein resides in the cell membrane. It carries out the reaction ATP-dependent breakage, passage and rejoining of double-stranded DNA.. Its function is as follows. Topoisomerase IV is essential for chromosome segregation. It relaxes supercoiled DNA. Performs the decatenation events required during the replication of a circular DNA molecule. The sequence is that of DNA topoisomerase 4 subunit A from Staphylococcus aureus (strain MRSA252).